The sequence spans 544 residues: Putative glycerol-3-phosphate transporter 4 (544 aa).

A run of 6 helical transmembrane segments spans residues 28 to 47 (TFRY…YHAS), 121 to 141 (VAFL…GDSL), 156 to 176 (FFVG…WFFL), 181 to 201 (AAGL…GNWF), 218 to 238 (SVGN…GWGW), and 240 to 260 (FIAP…FLAA). Residues 281 to 313 (KRDVEEEEEEVEEDLGTDVEGDGEGSSGSGSGY) are disordered. Positions 285–303 (EEEEEEVEEDLGTDVEGDG) are enriched in acidic residues. 7 consecutive transmembrane segments (helical) span residues 319-339 (VGLL…CLFF), 342-362 (LVAY…TIGG), 371-391 (GNLS…CGYI), 402-422 (AAAF…YGGV), 428-448 (ILLM…ITTA), 471-491 (AIID…TGFL), and 494-514 (LGWQ…GLLL).

This sequence belongs to the major facilitator superfamily. Organophosphate:Pi antiporter (OPA) (TC 2.A.1.4) family.

It is found in the membrane. This Arabidopsis thaliana (Mouse-ear cress) protein is Putative glycerol-3-phosphate transporter 4.